The primary structure comprises 340 residues: 3-isopropylmalate dehydrogenase (340 aa).

Substrate-binding residues include arginine 88, arginine 98, arginine 122, and aspartate 212. Residues aspartate 212, aspartate 236, and aspartate 240 each coordinate Mg(2+). 272–284 (GSAPDIAGQGIAD) contacts NAD(+).

Belongs to the isocitrate and isopropylmalate dehydrogenases family. LeuB type 2 subfamily. Homodimer. Requires Mg(2+) as cofactor. It depends on Mn(2+) as a cofactor.

It is found in the cytoplasm. It carries out the reaction (2R,3S)-3-isopropylmalate + NAD(+) = 4-methyl-2-oxopentanoate + CO2 + NADH. Its pathway is amino-acid biosynthesis; L-leucine biosynthesis; L-leucine from 3-methyl-2-oxobutanoate: step 3/4. Functionally, catalyzes the oxidation of 3-carboxy-2-hydroxy-4-methylpentanoate (3-isopropylmalate) to 3-carboxy-4-methyl-2-oxopentanoate. The product decarboxylates to 4-methyl-2 oxopentanoate. In Corynebacterium glutamicum (strain R), this protein is 3-isopropylmalate dehydrogenase.